A 582-amino-acid chain; its full sequence is PX domain-containing protein kinase-like protein (582 aa).

One can recognise a PX domain in the interval 14–126 (LDDTVPLTAA…KFLDPNNYSA (113 aa)). The region spanning 88 to 481 (FIAERQRGLQ…VENSEEQPVK (394 aa)) is the Protein kinase domain. The tract at residues 433–550 (EQKQIHQHRR…APFLPQPVNG (118 aa)) is disordered. 2 stretches are compositionally biased toward basic residues: residues 437–448 (IHQHRRLTRAQS) and 457–469 (KRRK…KSKR). Positions 483–514 (SNSNNSAGSGASSPLTSPSSPTPPSTAGLSSA) are enriched in low complexity. The span at 515–531 (LPPPPPPPPPPPPPAGP) shows a compositional bias: pro residues. The WH2 domain maps to 548–567 (VNGVNRGALLSSIQNFQKGT).

The protein belongs to the protein kinase superfamily. As to expression, isoform 1 is present in all tissues examined. Isoform 2 is found in all tissues except skeletal muscle and very low levels in spleen. Both isoforms are widely expressed throughout the nervous system however levels of isoform 2 are higher in purified hippocampal and cortical neurons whereas glial cells express more isoform 1 than isoform 2.

The protein localises to the cytoplasm. Its subcellular location is the cell membrane. In terms of biological role, binds to and modulates brain Na,K-ATPase subunits ATP1B1 and ATP1B3 and may thereby participate in the regulation of electrical excitability and synaptic transmission. May not display kinase activity. The sequence is that of PX domain-containing protein kinase-like protein from Mus musculus (Mouse).